The following is a 183-amino-acid chain: Adenine phosphoribosyltransferase (183 aa).

The protein belongs to the purine/pyrimidine phosphoribosyltransferase family. Homodimer.

The protein localises to the cytoplasm. It catalyses the reaction AMP + diphosphate = 5-phospho-alpha-D-ribose 1-diphosphate + adenine. It functions in the pathway purine metabolism; AMP biosynthesis via salvage pathway; AMP from adenine: step 1/1. In terms of biological role, catalyzes a salvage reaction resulting in the formation of AMP, that is energically less costly than de novo synthesis. The polypeptide is Adenine phosphoribosyltransferase (Salmonella gallinarum (strain 287/91 / NCTC 13346)).